The primary structure comprises 134 residues: Homeobox protein ceh-5 (134 aa).

Positions 35–94 (PKRPRTVFTDEQLEKLEESFNTSGYLSGSTRAKLAESLGLSDNQVKVWFQNRRTKQKKID) form a DNA-binding region, homeobox.

Its subcellular location is the nucleus. The polypeptide is Homeobox protein ceh-5 (ceh-5) (Caenorhabditis elegans).